Consider the following 285-residue polypeptide: 4-hydroxybenzoate octaprenyltransferase (285 aa).

8 helical membrane-spanning segments follow: residues 28–48, 86–106, 110–130, 133–153, 165–185, 210–230, 232–252, and 262–284; these read LWAM…WIFV, IAAW…FALV, NALT…YPFF, FFAI…PMAF, WLML…YAMV, IMLC…LLGL, WPYW…YTLI, and AAFR…AYAI.

The protein belongs to the UbiA prenyltransferase family. Mg(2+) serves as cofactor.

It is found in the cell inner membrane. It catalyses the reaction all-trans-octaprenyl diphosphate + 4-hydroxybenzoate = 4-hydroxy-3-(all-trans-octaprenyl)benzoate + diphosphate. Its pathway is cofactor biosynthesis; ubiquinone biosynthesis. In terms of biological role, catalyzes the prenylation of para-hydroxybenzoate (PHB) with an all-trans polyprenyl group. Mediates the second step in the final reaction sequence of ubiquinone-8 (UQ-8) biosynthesis, which is the condensation of the polyisoprenoid side chain with PHB, generating the first membrane-bound Q intermediate 3-octaprenyl-4-hydroxybenzoate. The protein is 4-hydroxybenzoate octaprenyltransferase of Cupriavidus necator (strain ATCC 17699 / DSM 428 / KCTC 22496 / NCIMB 10442 / H16 / Stanier 337) (Ralstonia eutropha).